Here is a 27-residue protein sequence, read N- to C-terminus: Caerulein precursor fragment R1 (27 aa).

In terms of tissue distribution, expressed by the skin glands.

It localises to the secreted. Antimicrobial peptide. The protein is Caerulein precursor fragment R1 of Xenopus ruwenzoriensis (Uganda clawed frog).